Consider the following 145-residue polypeptide: Small ribosomal subunit protein uS19 (145 aa).

Position 2 is an N-acetylalanine (A2). K108 is covalently cross-linked (Glycyl lysine isopeptide (Lys-Gly) (interchain with G-Cter in SUMO2)).

This sequence belongs to the universal ribosomal protein uS19 family. Component of the small ribosomal subunit.

The protein localises to the cytoplasm. In terms of biological role, component of the small ribosomal subunit. The ribosome is a large ribonucleoprotein complex responsible for the synthesis of proteins in the cell. The sequence is that of Small ribosomal subunit protein uS19 (RPS15) from Bos taurus (Bovine).